The primary structure comprises 359 residues: Putative transposase y4uE (359 aa).

Disordered stretches follow at residues 1 to 31 and 318 to 359; these read MGDGPNWRSLPEPSRFVGSDPSPPVPRAPGG and HYAH…EEAA.

The protein belongs to the transposase 9 family.

The chain is Putative transposase y4uE from Sinorhizobium fredii (strain NBRC 101917 / NGR234).